The primary structure comprises 669 residues: UvrABC system protein B (669 aa).

In terms of domain architecture, Helicase ATP-binding spans 26–183 (EGLEDGLAHQ…RRLADLQYTR (158 aa)). An ATP-binding site is contributed by 39-46 (GVTGSGKT). The short motif at 92–115 (YYDYYQPEAYVPSSDTFIEKDASV) is the Beta-hairpin element. Residues 431–593 (QVDDLLSEIR…IVPKGLNKKI (163 aa)) form the Helicase C-terminal domain. The 36-residue stretch at 629–664 (EKEIQRLETEMYQHAKDLEFEKAAQTRDKLQTLRAQ) folds into the UVR domain.

The protein belongs to the UvrB family. Forms a heterotetramer with UvrA during the search for lesions. Interacts with UvrC in an incision complex.

The protein resides in the cytoplasm. Functionally, the UvrABC repair system catalyzes the recognition and processing of DNA lesions. A damage recognition complex composed of 2 UvrA and 2 UvrB subunits scans DNA for abnormalities. Upon binding of the UvrA(2)B(2) complex to a putative damaged site, the DNA wraps around one UvrB monomer. DNA wrap is dependent on ATP binding by UvrB and probably causes local melting of the DNA helix, facilitating insertion of UvrB beta-hairpin between the DNA strands. Then UvrB probes one DNA strand for the presence of a lesion. If a lesion is found the UvrA subunits dissociate and the UvrB-DNA preincision complex is formed. This complex is subsequently bound by UvrC and the second UvrB is released. If no lesion is found, the DNA wraps around the other UvrB subunit that will check the other stand for damage. This Proteus mirabilis (strain HI4320) protein is UvrABC system protein B.